The chain runs to 156 residues: Arginine repressor (156 aa).

Belongs to the ArgR family.

It localises to the cytoplasm. Its pathway is amino-acid biosynthesis; L-arginine biosynthesis [regulation]. Regulates arginine biosynthesis genes. The chain is Arginine repressor from Vibrio cholerae serotype O1 (strain ATCC 39315 / El Tor Inaba N16961).